We begin with the raw amino-acid sequence, 404 residues long: Putative arginine deiminase (404 aa).

Cys-394 (amidino-cysteine intermediate) is an active-site residue.

This sequence belongs to the arginine deiminase family.

The protein resides in the cytoplasm. It carries out the reaction L-arginine + H2O = L-citrulline + NH4(+). It participates in amino-acid degradation; L-arginine degradation via ADI pathway; carbamoyl phosphate from L-arginine: step 1/2. The chain is Putative arginine deiminase (arcA) from Mycoplasma pneumoniae (strain ATCC 29342 / M129 / Subtype 1) (Mycoplasmoides pneumoniae).